The sequence spans 254 residues: Imidazole glycerol phosphate synthase subunit HisF (254 aa).

Catalysis depends on residues D13 and D132.

Belongs to the HisA/HisF family. Heterodimer of HisH and HisF.

The protein localises to the cytoplasm. The catalysed reaction is 5-[(5-phospho-1-deoxy-D-ribulos-1-ylimino)methylamino]-1-(5-phospho-beta-D-ribosyl)imidazole-4-carboxamide + L-glutamine = D-erythro-1-(imidazol-4-yl)glycerol 3-phosphate + 5-amino-1-(5-phospho-beta-D-ribosyl)imidazole-4-carboxamide + L-glutamate + H(+). It participates in amino-acid biosynthesis; L-histidine biosynthesis; L-histidine from 5-phospho-alpha-D-ribose 1-diphosphate: step 5/9. IGPS catalyzes the conversion of PRFAR and glutamine to IGP, AICAR and glutamate. The HisF subunit catalyzes the cyclization activity that produces IGP and AICAR from PRFAR using the ammonia provided by the HisH subunit. The protein is Imidazole glycerol phosphate synthase subunit HisF of Wolinella succinogenes (strain ATCC 29543 / DSM 1740 / CCUG 13145 / JCM 31913 / LMG 7466 / NCTC 11488 / FDC 602W) (Vibrio succinogenes).